We begin with the raw amino-acid sequence, 224 residues long: Synaptogyrin-2 (224 aa).

At methionine 1 the chain carries N-acetylmethionine. Phosphoserine is present on serine 3. Positions 20-171 (FLTQPQVVAR…LASLAYQRYK (152 aa)) constitute an MARVEL domain. 4 helical membrane-spanning segments follow: residues 26–46 (VVARAVCLVFALIVFSCIYGE), 73–93 (AIGVLAFLASAFFLVVDAYFP), 105–125 (VIGDLLFSALWTFLWFVGFCF), and 147–167 (AAITFSFFSIFSWGVLASLAY).

It belongs to the synaptogyrin family. In terms of assembly, (Microbial infection) Interacts with SFTS phlebovirus protein NSs; may be involved in virus replication. Post-translationally, may be tyrosine phosphorylated by Src. In terms of tissue distribution, ubiquitous; low expression in brain.

It is found in the cytoplasmic vesicle membrane. The protein resides in the cytoplasmic vesicle. It localises to the secretory vesicle. Its subcellular location is the synaptic vesicle membrane. The protein localises to the lipid droplet. May play a role in regulated exocytosis. In neuronal cells, modulates the localization of synaptophysin/SYP into synaptic-like microvesicles and may therefore play a role in the formation and/or the maturation of this vesicles. May also play a role in GLUT4 storage and transport to the plasma membrane. Functionally, (Microbial infection) May play a role in the assembly of cytoplasmic inclusion bodies required for SFTS phlebovirus replication. This Homo sapiens (Human) protein is Synaptogyrin-2.